The following is a 98-amino-acid chain: Cell division topological specificity factor (98 aa).

The protein belongs to the MinE family.

Its function is as follows. Prevents the cell division inhibition by proteins MinC and MinD at internal division sites while permitting inhibition at polar sites. This ensures cell division at the proper site by restricting the formation of a division septum at the midpoint of the long axis of the cell. The sequence is that of Cell division topological specificity factor from Nitrosomonas eutropha (strain DSM 101675 / C91 / Nm57).